Here is a 571-residue protein sequence, read N- to C-terminus: MAEEGAILKVTKDLRAAVSAILQGYGDGQGPVTDTSAELHRLCGCLELLLQFDQKEQKSFLGPRKDYWDFLCTALRRQRGNMEPIHFVRSQDKLKTPLGKGRAFIRFCLARGQLAEALQLCLLNSELTREWYGPRSPLLCPERQEDILDSLYALNGVAFELDLQQPDLDGAWPMFSESRCSSSTQTQGRRPRKNKDAPKKIPAAYGGPENVQIEDSHTSQAICLQDAPSGQQLAGLPRSQQQRHLPFFLEKKGESSRKHRYPQSMWEPEGKELQLDQEERAPWIEIFLGNSTPSTQGQGKGAMGTQKEVIGMEAEVTGVLLVAEGQRTTEGTHKKEAEWSHVQRLLMPSPRGAVEGAVSGSRQGSGGSSILGEPWVLQGHATKEDSTVENPQVQTEVTLVARREEQAEVSLQDEIKSLRLGLRKAEEQAQRQEQLLREQEGELQALREQLSRCQEERAELQAQLEQKQQEAERRDAMYQEELGGQRDLVQAMKRRVLELIQEKDRLWQRLQHLSSMAPECCVACSKIFGRFSRRYPCRLCGGLLCHACSMDYKKRDRCCPPCAQGREAQVT.

Residues Thr-33 to Pro-166 enclose the RUN domain. The segment at Met-174 to Gly-207 is disordered. Positions Ser-178–Gly-188 are enriched in polar residues. Residues Glu-408–Glu-481 are a coiled coil. An FYVE-type zinc finger spans residues Arg-474–Glu-567. Residues Cys-521, Cys-524, Cys-537, Cys-540, Cys-545, Cys-548, Cys-559, and Cys-562 each coordinate Zn(2+).

As to quaternary structure, forms homodimers (via coiled coil domain). Interacts with RAB7A. Forms a ternary complex with RAB7A and LAMP2; the interaction with RAB7A is mediated by RUFY4 (via RUN and coiled coil domains). Interacts with GTP-, but not GDP-bound ARL8A and ARL8B. Interacts with dynactin/DCTN1 and the dynein intermediate chain DYNC1I1/2.

The protein resides in the cytoplasmic vesicle. It localises to the autophagosome. The protein localises to the lysosome. Its function is as follows. ARL8 effector that promotes the coupling of endolysosomes to dynein-dynactin for retrograde transport along microtubules. Acts by binding both GTP-bound ARL8 and dynein-dynactin. In nonneuronal cells, promotes concentration of endolysosomes in the juxtanuclear area. In hippocampal neurons, drives retrograde transport of endolysosomes from the axon to the soma. Positive regulator of macroautophagy in dendritic cells. Increases autophagic flux, probably by stimulating both autophagosome formation and facilitating tethering with lysosomes. Binds to phosphatidylinositol 3-phosphate (PtdIns3P) through its FYVE-type zinc finger. Positive regulator of osteosclast bone-resorbing activity, possibly by promoting late endosome-lysosome fusion by acting as an adapter protein between RAB7A on late endosomes and LAMP2 on primary lysosomes. The protein is RUN and FYVE domain-containing protein 4 (RUFY4) of Homo sapiens (Human).